The following is a 169-amino-acid chain: Ribosome maturation factor RimM (169 aa).

Positions 97 to 169 constitute a PRC barrel domain; that stretch reads EDEVYFKDLI…KIVVDWEYDY (73 aa).

This sequence belongs to the RimM family. As to quaternary structure, binds ribosomal protein uS19.

The protein resides in the cytoplasm. Its function is as follows. An accessory protein needed during the final step in the assembly of 30S ribosomal subunit, possibly for assembly of the head region. Essential for efficient processing of 16S rRNA. May be needed both before and after RbfA during the maturation of 16S rRNA. It has affinity for free ribosomal 30S subunits but not for 70S ribosomes. The chain is Ribosome maturation factor RimM from Francisella tularensis subsp. tularensis (strain FSC 198).